The primary structure comprises 452 residues: Putative tripartite motif-containing protein 49B (452 aa).

An RING-type zinc finger spans residues 15–56 (CPICMNYFIDPVTIDCGHSFCRPCFYLNWKDSPFLVQCSECT). The B box-type zinc-finger motif lies at 88–129 (SEEQMCGTHRETKKMFCEVDRSLLCLLCSSSQEHRDHRHCPI). Cys93, His96, Cys115, and His121 together coordinate Zn(2+). The 184-residue stretch at 269-452 (ELSAGPITGL…LRPIFCCIHF (184 aa)) folds into the B30.2/SPRY domain.

The protein belongs to the TRIM/RBCC family.

The chain is Putative tripartite motif-containing protein 49B (TRIM49B) from Homo sapiens (Human).